Consider the following 806-residue polypeptide: G-type lectin S-receptor-like serine/threonine-protein kinase At1g61430 (806 aa).

A signal peptide spans 1-24; sequence MGKKRIVFFAYLPFFTIFMSFSFA. In terms of domain architecture, Bulb-type lectin spans 25 to 144; the sequence is GITKESPFSI…VSGRTLWQSF (120 aa). The Extracellular segment spans residues 25-425; that stretch reads GITKESPFSI…ELDVNKRKMT (401 aa). N-linked (GlcNAc...) asparagine glycosylation is found at Asn53, Asn94, Asn117, and Asn236. Positions 277 to 313 constitute an EGF-like domain; the sequence is PANSCDIYGVCGPFGLCVVSIPPKCKCFKGFVPKFAK. Intrachain disulfides connect Cys281/Cys293 and Cys287/Cys301. N-linked (GlcNAc...) asparagine glycosylation is found at Asn319, Asn335, and Asn374. The 83-residue stretch at 332 to 414 folds into the PAN domain; the sequence is CQGNSSGKDA…GELLSIRLAR (83 aa). Disulfide bonds link Cys367–Cys388 and Cys371–Cys377. Residues 426-446 form a helical membrane-spanning segment; that stretch reads IVASTVSLTLFVIFGFAAFGF. Residues 447–806 lie on the Cytoplasmic side of the membrane; sequence WRCRVEHNAH…EMTESVIQGR (360 aa). Residues 489-777 enclose the Protein kinase domain; the sequence is FSLSNKLGPG…DLPLPKKPTF (289 aa). ATP contacts are provided by residues 495 to 503 and Lys520; that span reads LGPGGFGSV. Residues Ser526 and Ser541 each carry the phosphoserine modification. The tract at residues 581 to 598 is caM-binding; that stretch reads RKKLELDWPKRFEIIEGI. The Proton acceptor role is filled by Asp617. Phosphoserine occurs at positions 621 and 634. Position 651 is a phosphothreonine (Thr651). Ser694, Ser695, and Ser788 each carry phosphoserine.

This sequence belongs to the protein kinase superfamily. Ser/Thr protein kinase family.

Its subcellular location is the cell membrane. The catalysed reaction is L-seryl-[protein] + ATP = O-phospho-L-seryl-[protein] + ADP + H(+). It carries out the reaction L-threonyl-[protein] + ATP = O-phospho-L-threonyl-[protein] + ADP + H(+). The chain is G-type lectin S-receptor-like serine/threonine-protein kinase At1g61430 from Arabidopsis thaliana (Mouse-ear cress).